The primary structure comprises 184 residues: ADP-ribosylation factor-like protein 2 (184 aa).

The N-myristoyl glycine moiety is linked to residue G2. Residues 23-30 (GLDNAGKT), 66-70 (DVGGQ), G68, and 125-128 (NKSD) each bind GTP.

This sequence belongs to the small GTPase superfamily. Arf family. As to expression, in the embryo, strongly expressed in migrating hypodermal cells. Shortly before the beginning of elongation, expressed in many developing neurons where it persists throughout adulthood. In the larva, highly expressed in migrating hypodermal cells and the uterus. Also expressed in vulva, spermatheca, sheath cells, distal tips cells and proctoderm of the male tail.

Its subcellular location is the cytoplasm. It localises to the cell membrane. The protein resides in the cytoskeleton. It is found in the microtubule organizing center. The protein localises to the centrosome. In terms of biological role, GTP-binding protein that functions in embryogenesis, cytokinesis, germline development and microtubulule cytoskeleton dynamics. In Caenorhabditis elegans, this protein is ADP-ribosylation factor-like protein 2 (evl-20).